Reading from the N-terminus, the 200-residue chain is MARYTGPAWKLSRRLGISLSGTGKELEKRPYAPGPHGPNQRKKLSEYGLQLQEKQKLRHMYGMTERQFRRTFDQAGKMPGKHGENFMILLEARLDNLVYRMGLARTRRAARQLVNHGHIMVDGARVDIPSYRVKPGQTISVREKSNNLVVVKEAIEVNNFVPEYLTFDADKLEATYTRHAERAELPAEINEALIVEFYSR.

Positions 22-42 are disordered; that stretch reads TGKELEKRPYAPGPHGPNQRK. Residues 92 to 152 form the S4 RNA-binding domain; sequence ARLDNLVYRM…EKSNNLVVVK (61 aa).

Belongs to the universal ribosomal protein uS4 family. In terms of assembly, part of the 30S ribosomal subunit. Contacts protein S5. The interaction surface between S4 and S5 is involved in control of translational fidelity.

In terms of biological role, one of the primary rRNA binding proteins, it binds directly to 16S rRNA where it nucleates assembly of the body of the 30S subunit. Functionally, with S5 and S12 plays an important role in translational accuracy. This Bacillus thuringiensis subsp. konkukian (strain 97-27) protein is Small ribosomal subunit protein uS4.